The chain runs to 112 residues: Low molecular weight protein antigen 6 (112 aa).

Its subcellular location is the secreted. This chain is Low molecular weight protein antigen 6 (cfp6), found in Mycobacterium bovis (strain ATCC BAA-935 / AF2122/97).